A 343-amino-acid polypeptide reads, in one-letter code: Tribbles homolog 2 (343 aa).

A disordered region spans residues 25–50 (EELSSIRSAEPSQSFSPNLGSPSPPE). Over residues 29-45 (SIRSAEPSQSFSPNLGS) the composition is skewed to polar residues. One can recognise a Protein kinase domain in the interval 61–308 (IGKYLLLEPL…SQEILDHPWF (248 aa)).

Belongs to the protein kinase superfamily. CAMK Ser/Thr protein kinase family. Tribbles subfamily. In terms of tissue distribution, expressed in granulosa cells of the dominant follicles of the ovary and down-regulated in ovulatory follicles.

It is found in the cytoplasm. The protein localises to the cytoskeleton. Interacts with MAPK kinases and regulates activation of MAP kinases. Does not display kinase activity. This chain is Tribbles homolog 2, found in Bos taurus (Bovine).